The chain runs to 61 residues: uncharacterized protein (61 aa).

This is an uncharacterized protein from Autographa californica nuclear polyhedrosis virus (AcMNPV).